We begin with the raw amino-acid sequence, 242 residues long: Phosphoribosylaminoimidazole-succinocarboxamide synthase (242 aa).

This sequence belongs to the SAICAR synthetase family.

The catalysed reaction is 5-amino-1-(5-phospho-D-ribosyl)imidazole-4-carboxylate + L-aspartate + ATP = (2S)-2-[5-amino-1-(5-phospho-beta-D-ribosyl)imidazole-4-carboxamido]succinate + ADP + phosphate + 2 H(+). It functions in the pathway purine metabolism; IMP biosynthesis via de novo pathway; 5-amino-1-(5-phospho-D-ribosyl)imidazole-4-carboxamide from 5-amino-1-(5-phospho-D-ribosyl)imidazole-4-carboxylate: step 1/2. The protein is Phosphoribosylaminoimidazole-succinocarboxamide synthase (purC) of Methanocaldococcus jannaschii (strain ATCC 43067 / DSM 2661 / JAL-1 / JCM 10045 / NBRC 100440) (Methanococcus jannaschii).